We begin with the raw amino-acid sequence, 256 residues long: Thiazole synthase (256 aa).

Catalysis depends on lysine 95, which acts as the Schiff-base intermediate with DXP. 1-deoxy-D-xylulose 5-phosphate-binding positions include glycine 156, 182 to 183 (AG), and 204 to 205 (NT).

This sequence belongs to the ThiG family. Homotetramer. Forms heterodimers with either ThiH or ThiS.

Its subcellular location is the cytoplasm. It catalyses the reaction [ThiS sulfur-carrier protein]-C-terminal-Gly-aminoethanethioate + 2-iminoacetate + 1-deoxy-D-xylulose 5-phosphate = [ThiS sulfur-carrier protein]-C-terminal Gly-Gly + 2-[(2R,5Z)-2-carboxy-4-methylthiazol-5(2H)-ylidene]ethyl phosphate + 2 H2O + H(+). The protein operates within cofactor biosynthesis; thiamine diphosphate biosynthesis. Catalyzes the rearrangement of 1-deoxy-D-xylulose 5-phosphate (DXP) to produce the thiazole phosphate moiety of thiamine. Sulfur is provided by the thiocarboxylate moiety of the carrier protein ThiS. In vitro, sulfur can be provided by H(2)S. In Escherichia coli (strain K12 / MC4100 / BW2952), this protein is Thiazole synthase.